A 1705-amino-acid chain; its full sequence is Clathrin heavy chain 1 (1705 aa).

Position 2 is an N-acetylalanine (A2). Residues 2–492 (AAANAPIIMK…VDNDLALKIY (491 aa)) form a globular terminal domain region. WD40-like repeat stretches follow at residues 25–67 (FITF…RPIT), 68–113 (ADSA…MPEQ), 114–155 (VAFW…ANLA), 156–205 (NNQI…QALE), 206–270 (AHAA…PDFA), 271–314 (DDFP…ISPD), and 315–343 (PIFL…ATVN). Residues 462-478 (ENWLAEDKLECSEELGD) form a binding site for the uncoating ATPase, involved in lattice disassembly region. Residues 493–536 (IKARATPKVVAAFAERREFDKILIYSKQVGYTPDYMFLLQTILR) form a flexible linker region. The interval 537–648 (TDPQGAVNFA…QSLKHYSELP (112 aa)) is distal segment. The heavy chain arm stretch occupies residues 537–1705 (TDPQGAVNFA…PYGMPPMGGY (1169 aa)). CHCR repeat units lie at residues 551–697 (QMEG…QIIV), 700–842 (CKEY…PEDF), 847–986 (ILSV…QLID), 993–1138 (LPES…VSDA), 1142–1283 (FIRA…FRLA), 1288–1434 (LNII…DIIN), and 1437–1580 (LNVL…KECF). A proximal segment region spans residues 653-1705 (VIVNTHAIEP…PYGMPPMGGY (1053 aa)). The involved in binding clathrin light chain stretch occupies residues 1227-1536 (AAKIIYAFIS…YIYKKAGRWK (310 aa)). Residues 1564–1705 (AEQLLVYFIE…PYGMPPMGGY (142 aa)) are trimerization.

It belongs to the clathrin heavy chain family. As to quaternary structure, clathrin triskelions, composed of 3 heavy chains and 3 light chains, are the basic subunits of the clathrin coat. Interacts with SCYL2B.

The protein localises to the cytoplasmic vesicle membrane. The protein resides in the membrane. It localises to the coated pit. Its function is as follows. Clathrin is the major protein of the polyhedral coat of coated pits and vesicles. Mediates endocytosis and is required for a correct polar distribution of PIN auxin transporters. This Arabidopsis thaliana (Mouse-ear cress) protein is Clathrin heavy chain 1.